A 584-amino-acid chain; its full sequence is Arginine--tRNA ligase (584 aa).

The 'HIGH' region motif lies at 126-136 (PNIAKEMHVGH).

This sequence belongs to the class-I aminoacyl-tRNA synthetase family. Monomer.

The protein localises to the cytoplasm. It catalyses the reaction tRNA(Arg) + L-arginine + ATP = L-arginyl-tRNA(Arg) + AMP + diphosphate. This is Arginine--tRNA ligase (argS) from Synechocystis sp. (strain ATCC 27184 / PCC 6803 / Kazusa).